The following is a 309-amino-acid chain: Olfactory receptor 8U1 (309 aa).

At 1–25 (MAHINCTQATEFILVGLTDHQELKM) the chain is on the extracellular side. N-linked (GlcNAc...) asparagine glycosylation occurs at asparagine 5. The chain crosses the membrane as a helical span at residues 26-46 (PLFVLFLSIYLFTVVGNLGLI). Residues 47–54 (LLIRADTS) lie on the Cytoplasmic side of the membrane. Residues 55 to 75 (LNTPMYFFLSNLAFVDFCYSS) form a helical membrane-spanning segment. Residues 76 to 99 (VITPKMLGNFLYKQNVISFDACAT) are Extracellular-facing. A disulfide bridge links cysteine 97 with cysteine 189. A helical membrane pass occupies residues 100 to 120 (QLGCFLTFMISESLLLASMAY). Topologically, residues 121–139 (DRYVAICNPLLYMVVMTPG) are cytoplasmic. Residues 140–160 (ICIQLVAVPYSYSFLMALFHT) form a helical membrane-spanning segment. The Extracellular portion of the chain corresponds to 161-197 (ILTFRLSYCHSNIVNHFYCDDMPLLRLTCSDTRFKQL). Residues 198-217 (WIFACAGIMFISSLLIVFVS) form a helical membrane-spanning segment. At 218–237 (YMFIISAILRMHSAEGRQKA) the chain is on the cytoplasmic side. A helical transmembrane segment spans residues 238 to 258 (FSTCGSHMLAVTIFYGTLIFM). The Extracellular segment spans residues 259–271 (YLQPSSSHALDTD). Residues 272–292 (KMASVFYTVIIPMLNPLIYSL) form a helical membrane-spanning segment. Over 293 to 309 (QNKEVKEALKKIIINKN) the chain is Cytoplasmic.

The protein belongs to the G-protein coupled receptor 1 family.

It localises to the cell membrane. Odorant receptor. This is Olfactory receptor 8U1 (OR8U1) from Homo sapiens (Human).